We begin with the raw amino-acid sequence, 95 residues long: N(2)-fixation sustaining protein CowN (95 aa).

This sequence belongs to the CowN family.

Its function is as follows. Is required to sustain N(2)-dependent growth in the presence of low levels of carbon monoxide (CO). Probably acts by protecting the N(2) fixation ability of the nitrogenase complex, which is inactivated in the presence of CO. This chain is N(2)-fixation sustaining protein CowN, found in Allochromatium vinosum (strain ATCC 17899 / DSM 180 / NBRC 103801 / NCIMB 10441 / D) (Chromatium vinosum).